Reading from the N-terminus, the 20-residue chain is Large ribosomal subunit protein uL5 (20 aa).

Belongs to the universal ribosomal protein uL5 family. In terms of assembly, part of the 50S ribosomal subunit; part of the 5S rRNA/L5/L18/L25 subcomplex. Contacts the 5S rRNA and the P site tRNA. Forms a bridge to the 30S subunit in the 70S ribosome.

Its function is as follows. This is one of the proteins that bind and probably mediate the attachment of the 5S RNA into the large ribosomal subunit, where it forms part of the central protuberance. In the 70S ribosome it contacts protein S13 of the 30S subunit (bridge B1b), connecting the two subunits; this bridge is implicated in subunit movement. Contacts the P site tRNA; the 5S rRNA and some of its associated proteins might help stabilize positioning of ribosome-bound tRNAs. This chain is Large ribosomal subunit protein uL5 (rplE), found in Bacillus cereus.